Here is a 169-residue protein sequence, read N- to C-terminus: Cytochrome c oxidase subunit 4 isoform 1, mitochondrial (169 aa).

Residues 1–22 (MLATRVFSLVGKRAISTSVCVR) constitute a mitochondrion transit peptide. The Mitochondrial matrix portion of the chain corresponds to 23-98 (AHESVVKSED…SFAEMNRGSN (76 aa)). Position 29 is an N6-acetyllysine; alternate (Lys-29). Lys-29 bears the N6-succinyllysine; alternate mark. Lys-53 bears the N6-acetyllysine mark. Ser-56 and Ser-58 each carry phosphoserine. Lys-60 bears the N6-acetyllysine; alternate mark. Position 60 is an N6-succinyllysine; alternate (Lys-60). Lys-67 carries the N6-acetyllysine modification. The chain crosses the membrane as a helical span at residues 99-124 (EWKTVVGGAMFFIGFTALVIMWQKHY). Topologically, residues 125–169 (VYGPLPQSFDKEWVAKQTKRMLDMKVNPIQGLASKWDYEKNEWKK) are mitochondrial intermembrane.

Belongs to the cytochrome c oxidase IV family. As to quaternary structure, component of the cytochrome c oxidase (complex IV, CIV), a multisubunit enzyme composed of 14 subunits. The complex is composed of a catalytic core of 3 subunits MT-CO1, MT-CO2 and MT-CO3, encoded in the mitochondrial DNA, and 11 supernumerary subunits COX4I1 (or COX4I2), COX5A, COX5B, COX6A1 (or COX6A2), COX6B1 (or COX6B2), COX6C, COX7A2 (or COX7A1), COX7B, COX7C, COX8A and NDUFA4, which are encoded in the nuclear genome. The complex exists as a monomer or a dimer and forms supercomplexes (SCs) in the inner mitochondrial membrane with NADH-ubiquinone oxidoreductase (complex I, CI) and ubiquinol-cytochrome c oxidoreductase (cytochrome b-c1 complex, complex III, CIII), resulting in different assemblies (supercomplex SCI(1)III(2)IV(1) and megacomplex MCI(2)III(2)IV(2)). Interacts with AFG1L. Interacts with PHB2; the interaction decreases in absence of SPHK2. Interacts with ABCB7; this interaction allows the regulation of cellular iron homeostasis and cellular reactive oxygen species (ROS) levels in cardiomyocytes. Interacts with FLVCR2; this interaction occurs in the absence of heme and is disrupted upon heme binding. Interacts with IRGC. As to expression, ubiquitous.

The protein resides in the mitochondrion inner membrane. Its pathway is energy metabolism; oxidative phosphorylation. Functionally, component of the cytochrome c oxidase, the last enzyme in the mitochondrial electron transport chain which drives oxidative phosphorylation. The respiratory chain contains 3 multisubunit complexes succinate dehydrogenase (complex II, CII), ubiquinol-cytochrome c oxidoreductase (cytochrome b-c1 complex, complex III, CIII) and cytochrome c oxidase (complex IV, CIV), that cooperate to transfer electrons derived from NADH and succinate to molecular oxygen, creating an electrochemical gradient over the inner membrane that drives transmembrane transport and the ATP synthase. Cytochrome c oxidase is the component of the respiratory chain that catalyzes the reduction of oxygen to water. Electrons originating from reduced cytochrome c in the intermembrane space (IMS) are transferred via the dinuclear copper A center (CU(A)) of subunit 2 and heme A of subunit 1 to the active site in subunit 1, a binuclear center (BNC) formed by heme A3 and copper B (CU(B)). The BNC reduces molecular oxygen to 2 water molecules using 4 electrons from cytochrome c in the IMS and 4 protons from the mitochondrial matrix. The polypeptide is Cytochrome c oxidase subunit 4 isoform 1, mitochondrial (Homo sapiens (Human)).